The sequence spans 180 residues: Inner membrane-spanning protein YciB (180 aa).

5 helical membrane passes run 22 to 42 (IFVASGALIVATLVALAFTWL), 50 to 70 (MTLVTAAMVLVFGTLTLAFHS), 72 to 92 (LFIKWKVTVLYVLFALALLVS), 121 to 141 (LSWAIFFLVCGLLNIYVAFWL), and 149 to 169 (FKVFGLTALTLIFTLISGVYI).

It belongs to the YciB family.

The protein resides in the cell inner membrane. In terms of biological role, plays a role in cell envelope biogenesis, maintenance of cell envelope integrity and membrane homeostasis. This is Inner membrane-spanning protein YciB from Yersinia pseudotuberculosis serotype O:1b (strain IP 31758).